A 130-amino-acid polypeptide reads, in one-letter code: uncharacterized protein (130 aa).

2 stretches are compositionally biased toward polar residues: residues 1-27 and 36-46; these read MEIL…QPSQ and QAENQETAKNG. 2 disordered regions span residues 1-46 and 103-130; these read MEIL…AKNG and VSAQ…ELDL. A coiled-coil region spans residues 27–51; sequence QDAHEKARQQAENQETAKNGMISQI.

Belongs to the PDCD5 family.

This is an uncharacterized protein from Caenorhabditis elegans.